We begin with the raw amino-acid sequence, 232 residues long: Orotate phosphoribosyltransferase (232 aa).

5-phospho-alpha-D-ribose 1-diphosphate contacts are provided by residues Arg107, Lys108, Lys111, and 133 to 141 (EDLTTDGGS). Residue Thr137 coordinates orotate.

Belongs to the purine/pyrimidine phosphoribosyltransferase family. PyrE subfamily. Homodimer. It depends on Mg(2+) as a cofactor.

The catalysed reaction is orotidine 5'-phosphate + diphosphate = orotate + 5-phospho-alpha-D-ribose 1-diphosphate. It functions in the pathway pyrimidine metabolism; UMP biosynthesis via de novo pathway; UMP from orotate: step 1/2. Its function is as follows. Catalyzes the transfer of a ribosyl phosphate group from 5-phosphoribose 1-diphosphate to orotate, leading to the formation of orotidine monophosphate (OMP). This is Orotate phosphoribosyltransferase from Cereibacter sphaeroides (strain ATCC 17025 / ATH 2.4.3) (Rhodobacter sphaeroides).